The primary structure comprises 205 residues: Holliday junction branch migration complex subunit RuvA (205 aa).

Residues 1-64 (MIGRLRGTLA…EDAHLLYGFH (64 aa)) form a domain I region. The domain II stretch occupies residues 65–143 (EKRERELFRE…AWETSPAMFT (79 aa)). The interval 144–153 (LVSDGPVPVS) is flexible linker. Residues 154–205 (GASTAEADAVSALVSLGYKPQEASKAVSAIKDKAGLSSEELIRRSLKGMITK) are domain III.

This sequence belongs to the RuvA family. In terms of assembly, homotetramer. Forms an RuvA(8)-RuvB(12)-Holliday junction (HJ) complex. HJ DNA is sandwiched between 2 RuvA tetramers; dsDNA enters through RuvA and exits via RuvB. An RuvB hexamer assembles on each DNA strand where it exits the tetramer. Each RuvB hexamer is contacted by two RuvA subunits (via domain III) on 2 adjacent RuvB subunits; this complex drives branch migration. In the full resolvosome a probable DNA-RuvA(4)-RuvB(12)-RuvC(2) complex forms which resolves the HJ.

It is found in the cytoplasm. The RuvA-RuvB-RuvC complex processes Holliday junction (HJ) DNA during genetic recombination and DNA repair, while the RuvA-RuvB complex plays an important role in the rescue of blocked DNA replication forks via replication fork reversal (RFR). RuvA specifically binds to HJ cruciform DNA, conferring on it an open structure. The RuvB hexamer acts as an ATP-dependent pump, pulling dsDNA into and through the RuvAB complex. HJ branch migration allows RuvC to scan DNA until it finds its consensus sequence, where it cleaves and resolves the cruciform DNA. The polypeptide is Holliday junction branch migration complex subunit RuvA (Pseudomonas putida (strain W619)).